Here is a 257-residue protein sequence, read N- to C-terminus: Acetylglutamate kinase (257 aa).

Substrate-binding positions include Gly43–Gly44, Arg65, and Asn157.

This sequence belongs to the acetylglutamate kinase family. ArgB subfamily.

The protein localises to the cytoplasm. The catalysed reaction is N-acetyl-L-glutamate + ATP = N-acetyl-L-glutamyl 5-phosphate + ADP. It functions in the pathway amino-acid biosynthesis; L-arginine biosynthesis; N(2)-acetyl-L-ornithine from L-glutamate: step 2/4. Catalyzes the ATP-dependent phosphorylation of N-acetyl-L-glutamate. In Mannheimia succiniciproducens (strain KCTC 0769BP / MBEL55E), this protein is Acetylglutamate kinase.